A 210-amino-acid polypeptide reads, in one-letter code: Superoxide dismutase [Mn], mitochondrial (210 aa).

Mn(2+)-binding residues include H29, H77, D164, and H168.

This sequence belongs to the iron/manganese superoxide dismutase family. In terms of assembly, homotetramer. It depends on Mn(2+) as a cofactor.

Its subcellular location is the mitochondrion matrix. The catalysed reaction is 2 superoxide + 2 H(+) = H2O2 + O2. Its function is as follows. Destroys superoxide anion radicals which are normally produced within the cells and which are toxic to biological systems. This is Superoxide dismutase [Mn], mitochondrial (sodB) from Aspergillus oryzae (strain ATCC 42149 / RIB 40) (Yellow koji mold).